A 52-amino-acid polypeptide reads, in one-letter code: Histone H2A (52 aa).

The interval 1–25 (MSGRGKTGGKARAKAKTRSSRAGLQ) is disordered. Residue Ser2 is modified to N-acetylserine. Ser2 is subject to Phosphoserine. At Lys6 the chain carries N6-(2-hydroxyisobutyryl)lysine. An N6-acetyllysine modification is found at Lys6. The segment covering 7 to 19 (TGGKARAKAKTRS) has biased composition (basic residues). An N6-(2-hydroxyisobutyryl)lysine; alternate modification is found at Lys10. An N6-lactoyllysine; alternate modification is found at Lys10. Position 10 is an N6-succinyllysine (Lys10). Residues Lys14 and Lys16 each participate in a glycyl lysine isopeptide (Lys-Gly) (interchain with G-Cter in ubiquitin) cross-link. Lys37 carries the N6-(2-hydroxyisobutyryl)lysine; alternate modification.

As to quaternary structure, the nucleosome is a histone octamer containing two molecules each of H2A, H2B, H3 and H4 assembled in one H3-H4 heterotetramer and two H2A-H2B heterodimers. The octamer wraps approximately 147 bp of DNA. In terms of processing, acetylation is not necessary for the antibacterial activity. Monoubiquitination in C-terminus gives a specific tag for epigenetic transcriptional repression. Following DNA double-strand breaks (DSBs), it is ubiquitinated through 'Lys-63' linkage of ubiquitin moieties, leading to the recruitment of repair proteins to sites of DNA damage. H2AK119Ub and ionizing radiation-induced 'Lys-63'-linked ubiquitination are distinct events. Post-translationally, phosphorylation on Ser-2 is enhanced during mitosis. Phosphorylation on Ser-2 directly represses transcription.

It is found in the nucleus. The protein resides in the chromosome. The protein localises to the secreted. Its function is as follows. Core component of nucleosome. Nucleosomes wrap and compact DNA into chromatin, limiting DNA accessibility to the cellular machineries which require DNA as a template. Histones thereby play a central role in transcription regulation, DNA repair, DNA replication and chromosomal stability. DNA accessibility is regulated via a complex set of post-translational modifications of histones, also called histone code, and nucleosome remodeling. Functionally, hipposin shows strong antimicrobial activity against several Gram-positive and Gram-negative bacteria. The sequence is that of Histone H2A from Hippoglossus hippoglossus (Atlantic halibut).